We begin with the raw amino-acid sequence, 1164 residues long: DNA-directed RNA polymerase subunit beta (1164 aa).

The protein belongs to the RNA polymerase beta chain family. As to quaternary structure, the RNAP catalytic core consists of 2 alpha, 1 beta, 1 beta' and 1 omega subunit. When a sigma factor is associated with the core the holoenzyme is formed, which can initiate transcription.

It catalyses the reaction RNA(n) + a ribonucleoside 5'-triphosphate = RNA(n+1) + diphosphate. Functionally, DNA-dependent RNA polymerase catalyzes the transcription of DNA into RNA using the four ribonucleoside triphosphates as substrates. The protein is DNA-directed RNA polymerase subunit beta of Saccharopolyspora erythraea (strain ATCC 11635 / DSM 40517 / JCM 4748 / NBRC 13426 / NCIMB 8594 / NRRL 2338).